The following is a 203-amino-acid chain: Phosphatidylethanolamine N-methyltransferase (203 aa).

The enzyme catalyses a 1,2-diacyl-sn-glycero-3-phosphoethanolamine + S-adenosyl-L-methionine = a 1,2-diacyl-sn-glycero-3-phospho-N-methylethanolamine + S-adenosyl-L-homocysteine + H(+). The protein operates within phospholipid metabolism; phosphatidylcholine biosynthesis. Its function is as follows. This enzyme catalyzes three distinct methylation reactions for converting phosphatidylethanolamine to phosphatidylcholine. The chain is Phosphatidylethanolamine N-methyltransferase (pmtA) from Cereibacter sphaeroides (Rhodobacter sphaeroides).